The following is a 507-amino-acid chain: F-box only protein 31 (507 aa).

Residues 19 to 42 (RQQRRGPAETAAADSEADTDPEEE) are disordered. At S33 the chain carries Phosphoserine. A compositionally biased stretch (acidic residues) spans 33-42 (SEADTDPEEE). T37 is subject to Phosphothreonine. A D box motif is present at residues 50–55 (RCSLLE). The region spanning 50–96 (RCSLLELPPELLVEIFASLPGTDLPSLAQVCSRFRRILHTDTIWRRR) is the F-box domain. Zn(2+)-binding residues include C192, H200, C216, and H222. Phosphoserine; by ATM is present on S264. The DDL motif motif lies at 283–285 (DDL). Residues 364–421 (RQEQEAGEGPAPHREPAVKDPEGPPAKASKEAGPGAEAAEQSSTSGQGQPFVLPAGVS) form a disordered region. The segment covering 374-385 (APHREPAVKDPE) has biased composition (basic and acidic residues). At S448 the chain carries Phosphoserine.

It belongs to the FBXO31 family. As to quaternary structure, part of a SCF (SKP1-cullin-F-box) protein ligase complex SCF(FBXO31) composed of CUL1, SKP1, RBX1 and FBXO31. Interacts (when phosphorylated at Ser-33) with CDC20, promoting ubiquitination by the APC/C complex. In terms of processing, phosphorylation at Ser-264 by ATM following gamma-irradiation results in its stabilization. Phosphorylation at Ser-448 in absence of stress promotes its ubiquitination and degradation by the SCF(FBXO46) complex. Phosphorylation at Ser-33 by AKT1 promotes association with CDC20 and ubiquitination by the APC/C complex. Post-translationally, ubiquitinated by the SCF(FBXO46) complex in absence of stress, promoting its degradation. Ubiquitinated by the APC/C complex following phosphorylation at Ser-33, leading to its degradation by the proteasome.

The protein localises to the cytoplasm. Its subcellular location is the cytoskeleton. It is found in the microtubule organizing center. The protein resides in the centrosome. It participates in protein modification; protein ubiquitination. Functionally, substrate-recognition component of the SCF(FBXO31) protein ligase complex, which specifically mediates the ubiquitination of proteins amidated at their C-terminus in response to oxidative stress, leading to their degradation by the proteasome. FBXO31 specifically recognizes and binds C-terminal peptides bearing an amide: C-terminal amidation in response to oxidative stress takes place following protein fragmentation. The SCF(FBXO31) also plays a role in G1 arrest following DNA damage by mediating ubiquitination of phosphorylated cyclin-D1 (CCND1), promoting its degradation by the proteasome, resulting in G1 arrest. The SCF(FBXO31) complex is however not a major regulator of CCND1 stability during the G1/S transition. In response to genotoxic stress, the SCF(FBXO31) complex directs ubiquitination and degradation of phosphorylated MDM2, thereby promoting p53/TP53-mediated DNA damage response. SCF(FBXO31) complex is required for genomic integrity by catalyzing ubiquitination and degradation of cyclin-A (CCNA1 and/or CCNA2) during the G1 phase. In response to genotoxic stress, the SCF(FBXO31) complex directs ubiquitination and degradation of phosphorylated FBXO46 and MAP2K6. SCF(FBXO31) complex promotes ubiquitination and degradation of CDT1 during the G2 phase to prevent re-replication. The SCF(FBXO31) complex also mediates ubiquitination and degradation of DUSP6, OGT and PARD6A. This chain is F-box only protein 31, found in Rattus norvegicus (Rat).